The following is a 678-amino-acid chain: RNA helicase NPH-II (678 aa).

The 177-residue stretch at 175-351 (FTSWARRVPV…EFFAESVFVH (177 aa)) folds into the Helicase ATP-binding domain. Residue 188 to 195 (GDTGVGKT) coordinates ATP. Residues 300–303 (DEVH) carry the DEXH box motif. Residues 371 to 546 (PLNRFMYIEE…VFDLQLPEDL (176 aa)) enclose the Helicase C-terminal domain.

It belongs to the DEAD box helicase family. DEAH subfamily. As to quaternary structure, monomer.

It localises to the virion. The catalysed reaction is ATP + H2O = ADP + phosphate + H(+). Functionally, NTP-dependent helicase that catalyzes unidirectional unwinding of 3'tailed duplex RNAs and plays an important role during transcription of early mRNAs, presumably by preventing R-loop formation behind the elongating RNA polymerase. Might also play a role in the export of newly synthesized mRNA chains out of the core into the cytoplasm. Required for replication and propagation of viral particles. The polypeptide is RNA helicase NPH-II (OPG084) (Oryctolagus cuniculus (Rabbit)).